The following is a 257-amino-acid chain: 1-(5-phosphoribosyl)-5-[(5-phosphoribosylamino)methylideneamino] imidazole-4-carboxamide isomerase (257 aa).

The Proton acceptor role is filled by Asp8. Asp131 acts as the Proton donor in catalysis.

It belongs to the HisA/HisF family.

The protein resides in the cytoplasm. The catalysed reaction is 1-(5-phospho-beta-D-ribosyl)-5-[(5-phospho-beta-D-ribosylamino)methylideneamino]imidazole-4-carboxamide = 5-[(5-phospho-1-deoxy-D-ribulos-1-ylimino)methylamino]-1-(5-phospho-beta-D-ribosyl)imidazole-4-carboxamide. It participates in amino-acid biosynthesis; L-histidine biosynthesis; L-histidine from 5-phospho-alpha-D-ribose 1-diphosphate: step 4/9. The sequence is that of 1-(5-phosphoribosyl)-5-[(5-phosphoribosylamino)methylideneamino] imidazole-4-carboxamide isomerase from Nitrosospira multiformis (strain ATCC 25196 / NCIMB 11849 / C 71).